We begin with the raw amino-acid sequence, 458 residues long: Bifunctional protein GlmU (458 aa).

A pyrophosphorylase region spans residues 1-229 (MNKFAIVLAA…FDESLGVNDR (229 aa)). Residues 8–11 (LAAG), Lys22, Gln72, and 77–78 (GT) contribute to the UDP-N-acetyl-alpha-D-glucosamine site. Asp102 is a Mg(2+) binding site. Residues Gly139, Glu154, Asn169, and Asn227 each contribute to the UDP-N-acetyl-alpha-D-glucosamine site. Asn227 contributes to the Mg(2+) binding site. The interval 230–250 (VALSQAELTMRKRINHQHMVN) is linker. Residues 251 to 458 (GVTLIDPATT…AKKMPHYRGQ (208 aa)) are N-acetyltransferase. Arg332 and Lys350 together coordinate UDP-N-acetyl-alpha-D-glucosamine. His362 serves as the catalytic Proton acceptor. Residues Tyr365 and Asn376 each coordinate UDP-N-acetyl-alpha-D-glucosamine. The acetyl-CoA site is built by Ala379, Ser404, Ala422, and Arg439.

It in the N-terminal section; belongs to the N-acetylglucosamine-1-phosphate uridyltransferase family. This sequence in the C-terminal section; belongs to the transferase hexapeptide repeat family. As to quaternary structure, homotrimer. The cofactor is Mg(2+).

Its subcellular location is the cytoplasm. It carries out the reaction alpha-D-glucosamine 1-phosphate + acetyl-CoA = N-acetyl-alpha-D-glucosamine 1-phosphate + CoA + H(+). It catalyses the reaction N-acetyl-alpha-D-glucosamine 1-phosphate + UTP + H(+) = UDP-N-acetyl-alpha-D-glucosamine + diphosphate. Its pathway is nucleotide-sugar biosynthesis; UDP-N-acetyl-alpha-D-glucosamine biosynthesis; N-acetyl-alpha-D-glucosamine 1-phosphate from alpha-D-glucosamine 6-phosphate (route II): step 2/2. The protein operates within nucleotide-sugar biosynthesis; UDP-N-acetyl-alpha-D-glucosamine biosynthesis; UDP-N-acetyl-alpha-D-glucosamine from N-acetyl-alpha-D-glucosamine 1-phosphate: step 1/1. It participates in bacterial outer membrane biogenesis; LPS lipid A biosynthesis. Its function is as follows. Catalyzes the last two sequential reactions in the de novo biosynthetic pathway for UDP-N-acetylglucosamine (UDP-GlcNAc). The C-terminal domain catalyzes the transfer of acetyl group from acetyl coenzyme A to glucosamine-1-phosphate (GlcN-1-P) to produce N-acetylglucosamine-1-phosphate (GlcNAc-1-P), which is converted into UDP-GlcNAc by the transfer of uridine 5-monophosphate (from uridine 5-triphosphate), a reaction catalyzed by the N-terminal domain. The polypeptide is Bifunctional protein GlmU (Lactococcus lactis subsp. lactis (strain IL1403) (Streptococcus lactis)).